The following is an 80-amino-acid chain: SGDLGAERYAKMCKSCHGADGSNAAMSRALKGLPAEEVKAALIGYKEQTYGGKKKGMMERVVKSLTDEDIEVLATHIGTF.

Heme c contacts are provided by C13, C16, H17, and M58.

In terms of processing, binds 1 heme c group covalently per subunit.

The protein resides in the periplasm. Natural electron acceptor for a formate dehydrogenase. The chain is Cytochrome c-553 from Desulfomicrobium norvegicum (strain DSM 1741 / NCIMB 8310) (Desulfovibrio baculatus (strain Norway 4)).